The following is a 363-amino-acid chain: Ferredoxin--NADP reductase, cyanelle (363 aa).

Residues 1 to 65 constitute a cyanelle transit peptide; sequence MAFVASVPVF…TFEVDTTIRA (65 aa). One can recognise an FAD-binding FR-type domain in the interval 84–206; the sequence is ANPYIGKCIY…TGPVGTTMLM (123 aa). FAD contacts are provided by residues 142-145, 163-165, Tyr-169, 180-182, and Thr-221; these read RLYS, SVK, and VCS. 2 residues coordinate NADP(+): Ser-145 and Lys-165. NADP(+) contacts are provided by residues Thr-221, 253–254, 283–284, Lys-293, 322–323, and Glu-361; these read VP, SR, and GL.

The protein belongs to the ferredoxin--NADP reductase type 1 family. FAD serves as cofactor.

The protein localises to the plastid. It is found in the cyanelle stroma. Its subcellular location is the cyanelle thylakoid membrane. It catalyses the reaction 2 reduced [2Fe-2S]-[ferredoxin] + NADP(+) + H(+) = 2 oxidized [2Fe-2S]-[ferredoxin] + NADPH. In terms of biological role, may play a key role in regulating the relative amounts of cyclic and non-cyclic electron flow to meet the demands of the plant for ATP and reducing power. The polypeptide is Ferredoxin--NADP reductase, cyanelle (PETH) (Cyanophora paradoxa).